The following is a 333-amino-acid chain: MAPHWTLRQLRLVALAAASGSYAKAAQDMGLSPPAVTAQMKALEEDIGVPMFERVDGRLRPTAAGQELLSAQERIARALSEAERAIAALKSPERGSVVVGVVSTAKYFAPMALAAFRRRRPEIELRLIIGNREDIIRGIVSLDFDVAIMGRPPPALEAETRLIGDHPHIVVAPVDHPLFKRRKRITPADLTRESLLVREPGSGTRILMERVFEEAGAPNPPIAMEIGSNETIKQSVMAGLGLAFISAHTVAAEVADGRLRVLEVEGLPVVRQWLAVRARDKRLLPAGQALMDFLEREGASFLPQMPGGEGGRCYLPDHVSGSTPAKAVARDPV.

An HTH lysR-type domain is found at 5–62; it reads WTLRQLRLVALAAASGSYAKAAQDMGLSPPAVTAQMKALEEDIGVPMFERVDGRLRPT. Residues 22–41 constitute a DNA-binding region (H-T-H motif); the sequence is YAKAAQDMGLSPPAVTAQMK.

Belongs to the LysR transcriptional regulatory family.

In terms of biological role, transcriptional activator for the cbb operon (cbbLSXFP) for RuBisCO and other Calvin cycle genes. Binds specifically to two binding sites in the cbbR-cbbL intergenic region. In Xanthobacter flavus, this protein is HTH-type transcriptional regulator CbbR (cbbR).